The primary structure comprises 114 residues: Cytochrome c oxidase subunit 4B (114 aa).

3 helical membrane passes run 29 to 49 (QIVVFALMIFLTLMSFMAVAT), 56 to 76 (FAIPFIFILAVIQFALQLFFF), and 89 to 109 (AFMISGIFITVPTIAALMLLL).

It belongs to the cytochrome c oxidase bacterial subunit 4 family.

It is found in the cell membrane. It carries out the reaction 4 Fe(II)-[cytochrome c] + O2 + 8 H(+)(in) = 4 Fe(III)-[cytochrome c] + 2 H2O + 4 H(+)(out). This chain is Cytochrome c oxidase subunit 4B (ctaF), found in Alkalihalophilus pseudofirmus (strain ATCC BAA-2126 / JCM 17055 / OF4) (Bacillus pseudofirmus).